The primary structure comprises 971 residues: Lon protease homolog, mitochondrial (971 aa).

The transit peptide at 1–55 (MYRAGAVLLRGATRTRLLAAASAHQSFATFSQRNQSILMMKSMELAGNSGERRFY) directs the protein to the mitochondrion. Positions 89–359 (VPMLAINRYP…IALLLIQKEK (271 aa)) constitute a Lon N-terminal domain. Positions 190 to 255 (TPKNETPLNG…PPSATGEKQK (66 aa)) are disordered. Residues 214–224 (LTPPPSPPPLA) show a composition bias toward pro residues. 512–519 (GPPGVGKT) is an ATP binding site. The tract at residues 718 to 749 (AEQQNEDEEPAEKATTAITENSEAEPITSTSS) is disordered. The span at 733–749 (TAITENSEAEPITSTSS) shows a compositional bias: polar residues. The 188-residue stretch at 784–971 (VTPPGVIMGL…YDELYEHLFQ (188 aa)) folds into the Lon proteolytic domain. Residues Ser-878 and Lys-921 contribute to the active site.

It belongs to the peptidase S16 family. As to quaternary structure, homohexamer or homoheptamer. Organized in a ring with a central cavity.

The protein localises to the mitochondrion matrix. It carries out the reaction Hydrolysis of proteins in presence of ATP.. ATP-dependent serine protease that mediates the selective degradation of misfolded, unassembled or oxidatively damaged polypeptides as well as certain short-lived regulatory proteins in the mitochondrial matrix. May also have a chaperone function in the assembly of inner membrane protein complexes. Participates in the regulation of mitochondrial gene expression and in the maintenance of the integrity of the mitochondrial genome. Binds to mitochondrial DNA in a site-specific manner. Involved in the degradation of transcription factor atfs-1 in the mitochondrion. This chain is Lon protease homolog, mitochondrial, found in Caenorhabditis elegans.